A 185-amino-acid chain; its full sequence is Vomeronasal secretory protein 2 (185 aa).

The N-terminal stretch at 1 to 19 is a signal peptide; that stretch reads MKSLLLTVTLSSLVATLQT. An intrachain disulfide couples cysteine 80 to cysteine 172.

This sequence belongs to the calycin superfamily. Lipocalin family. As to expression, specifically expressed in vomeronasal and posterior glands of the nasal septum, the ducts of which open into the lumen of the vomeronasal organ.

The protein resides in the secreted. In terms of biological role, transport of lipophilic molecules, possible pheromone-carrier. The protein is Vomeronasal secretory protein 2 (Lcn4) of Mus musculus (Mouse).